A 471-amino-acid chain; its full sequence is MKIKTRFAPSPTGYLHVGGARTALYSWLFARNHGGEFVLRIEDTDLERSTPEAIEAIMDGMNWLSLEWDEGPYYQTKRFDRYNAVIDQMLEEGTAYKCYCSKERLEALREEQMAKGEKPRYDGRCRHSHEHHADDEPCVVRFANPQEGSVVFDDQIRGPIEFSNQELDDLIIRRTDGSPTYNFCVVVDDWDMEITHVIRGEDHINNTPRQINILKALKAPVPVYAHVSMINGDDGKKLSKRHGAVSVMQYRDDGYLPEALLNYLVRLGWSHGDQEIFTREEMIKYFTLNAVSKSASAFNTDKLLWLNHHYINALPPEYVATHLQWHIEQENIDTRNGPQLADLVKLLGERCKTLKEMAQSCRYFYEDFAEFDADARKKHLRPVARQPLEVVRDKLAAITDWPAENVHHAIQATADELEVGMGKVGMPLRVAVTGAGQSPALDVTVHAIGKTRSIERINKALDFIAERENQQ.

A 'HIGH' region motif is present at residues 9–19 (PSPTGYLHVGG). Zn(2+) contacts are provided by C98, C100, C125, and H127. Residues 237 to 241 (KLSKR) carry the 'KMSKS' region motif. Residue K240 participates in ATP binding.

The protein belongs to the class-I aminoacyl-tRNA synthetase family. Glutamate--tRNA ligase type 1 subfamily. As to quaternary structure, monomer. Zn(2+) serves as cofactor.

Its subcellular location is the cytoplasm. It catalyses the reaction tRNA(Glu) + L-glutamate + ATP = L-glutamyl-tRNA(Glu) + AMP + diphosphate. Catalyzes the attachment of glutamate to tRNA(Glu) in a two-step reaction: glutamate is first activated by ATP to form Glu-AMP and then transferred to the acceptor end of tRNA(Glu). The chain is Glutamate--tRNA ligase from Shigella flexneri.